A 398-amino-acid chain; its full sequence is ATP-dependent RNA helicase RhlB (398 aa).

The Q motif motif lies at 9-37 (TRFHDFKLSNELMHAIHDLGFPYCTPIQA). A Helicase ATP-binding domain is found at 40-220 (LGYTLRGQDA…KQWTTNPAIV (181 aa)). 53 to 60 (AQTGTGKT) is an ATP binding site. Residues 166–169 (DEAD) carry the DEAD box motif. One can recognise a Helicase C-terminal domain in the interval 243-393 (DKYKLLYNLV…MPPDELLKPV (151 aa)).

It belongs to the DEAD box helicase family. RhlB subfamily. Component of the RNA degradosome, which is a multiprotein complex involved in RNA processing and mRNA degradation.

It is found in the cytoplasm. The enzyme catalyses ATP + H2O = ADP + phosphate + H(+). Its function is as follows. DEAD-box RNA helicase involved in RNA degradation. Has RNA-dependent ATPase activity and unwinds double-stranded RNA. The polypeptide is ATP-dependent RNA helicase RhlB (Pseudomonas putida (strain ATCC 47054 / DSM 6125 / CFBP 8728 / NCIMB 11950 / KT2440)).